Reading from the N-terminus, the 109-residue chain is Iron-sulfur cluster assembly protein CyaY (109 aa).

This sequence belongs to the frataxin family.

Its function is as follows. Involved in iron-sulfur (Fe-S) cluster assembly. May act as a regulator of Fe-S biogenesis. The protein is Iron-sulfur cluster assembly protein CyaY of Bordetella pertussis (strain Tohama I / ATCC BAA-589 / NCTC 13251).